The chain runs to 231 residues: Sensory transduction protein BceR (231 aa).

The region spanning 3 to 116 (KLLLIEDDES…VLIAKIQAMF (114 aa)) is the Response regulatory domain. Asp-52 carries the post-translational modification 4-aspartylphosphate. Positions 127–225 (STIKTWCGAA…KVGQGYIAKE (99 aa)) form a DNA-binding region, ompR/PhoB-type.

Post-translationally, phosphorylated by BceS.

Its subcellular location is the cytoplasm. In terms of biological role, member of the two-component regulatory system BceS/BceR involved in the regulation of bacitracin resistance. When activated by BceS, binds to the upstream region of the bceAB promoter and up-regulates the expression of these two genes. The sequence is that of Sensory transduction protein BceR (bceR) from Bacillus subtilis (strain 168).